The following is a 1450-amino-acid chain: Auxilin-like protein 1 (1450 aa).

Disordered regions lie at residues 117-142 (NEDK…GKKS), 241-318 (STRD…AESS), 357-383 (DSKI…SQIL), 459-480 (NSKQ…TKQE), 512-541 (SQKD…SQEM), 556-575 (EETP…EKSE), 908-946 (DRSE…RSSF), 961-1046 (EQHR…ELEH), 1077-1168 (GAAT…ERKQ), 1192-1241 (AGKT…AERA), and 1254-1328 (AMEK…SDRA). Residues 316–344 (ESSAALKKAIEEAQIRMNIAKQMMEKKKS) adopt a coiled-coil conformation. Over residues 357 to 366 (DSKIENKGNT) the composition is skewed to basic and acidic residues. 7 stretches are compositionally biased toward basic and acidic residues: residues 512–524 (SQKD…EKEN), 564–575 (SKSEMNIEEKSE), 908–923 (DRSE…RFDQ), 1037–1046 (RNGDKKELEH), 1117–1131 (NMKE…RSSM), 1147–1168 (ETVE…ERKQ), and 1192–1226 (AGKT…KLSS). Coiled-coil stretches lie at residues 1142–1184 (SQNK…RERA) and 1219–1257 (EVND…AMEK). Residues 1270–1299 (SYGGSKSFSSSGERRGSSSSGTENKSSGPS) show a composition bias toward low complexity. Positions 1310-1328 (PIQRCKARSERHQRTSDRA) are enriched in basic and acidic residues. Residues 1327-1355 (RAAEALAEKKLRDLKTQKEQTERNRLAEA) are a coiled coil. One can recognise a J domain in the interval 1377 to 1450 (TLQYILGAES…AWNKFGADER (74 aa)).

The chain is Auxilin-like protein 1 (AUL1) from Arabidopsis thaliana (Mouse-ear cress).